Here is a 1379-residue protein sequence, read N- to C-terminus: ABC multidrug transporter MDR2 (1379 aa).

A helical transmembrane segment spans residues 65-85 (IALIVIGTIAGIGAGIPFPLL). Residues 69–367 (VIGTIAGIGA…MAPFMHIFAS (299 aa)) form the ABC transmembrane type-1 1 domain. N-linked (GlcNAc...) asparagine glycosylation occurs at Asn-97. 5 helical membrane-spanning segments follow: residues 119-139 (VLQV…HTGC), 193-213 (KVGL…VAFL), 215-235 (VATI…MAFG), 301-321 (IQFG…FWQG), and 336-356 (VSVG…FVLS). An ABC transporter 1 domain is found at 403 to 682 (IELQDVTFNY…DGVYAGMVRL (280 aa)). 438-445 (GTSGSGKS) provides a ligand contact to ATP. 2 N-linked (GlcNAc...) asparagine glycosylation sites follow: Asn-552 and Asn-633. Residues 738–758 (YMPEEADSLPTEPENEKEKPK) are disordered. The next 4 membrane-spanning stretches (helical) occupy residues 781–801 (LGLI…VIFG), 820–840 (GMLF…AVIV), 881–901 (LLVA…GTTI), and 920–942 (VIAW…SGVL). Residues 781–1068 (LGLITSIMIG…MFALVPDISK (288 aa)) enclose the ABC transmembrane type-1 2 domain. Asn-989 carries N-linked (GlcNAc...) asparagine glycosylation. 2 helical membrane passes run 1008-1028 (FWLS…YWWG) and 1032-1052 (ILAG…LLFS). The 240-residue stretch at 1135 to 1374 (VQFRNVHFRY…CESYRANVIH (240 aa)) folds into the ABC transporter 2 domain. 1170 to 1177 (GPSGSGKS) lines the ATP pocket.

It belongs to the ABC transporter superfamily. ABCB family. Multidrug resistance exporter (TC 3.A.1.201) subfamily.

Its subcellular location is the cell membrane. Pleiotropic ABC efflux transporter that may be involved in the modulation susceptibility to a wide range of unrelated cytotoxic compounds. This chain is ABC multidrug transporter MDR2, found in Trichophyton interdigitale (strain MR816).